A 417-amino-acid chain; its full sequence is Multifunctional CCA protein (417 aa).

ATP is bound by residues G8 and R11. Residues G8 and R11 each coordinate CTP. Residues D21 and D23 each coordinate Mg(2+). Positions 91, 143, and 146 each coordinate ATP. CTP is bound by residues R91, R143, and R146. One can recognise an HD domain in the interval 232-333; the sequence is TGVHVMMVVD…VRLFERSDAL (102 aa).

The protein belongs to the tRNA nucleotidyltransferase/poly(A) polymerase family. Bacterial CCA-adding enzyme type 1 subfamily. As to quaternary structure, monomer. Can also form homodimers and oligomers. Mg(2+) serves as cofactor. Ni(2+) is required as a cofactor.

The catalysed reaction is a tRNA precursor + 2 CTP + ATP = a tRNA with a 3' CCA end + 3 diphosphate. It carries out the reaction a tRNA with a 3' CCA end + 2 CTP + ATP = a tRNA with a 3' CCACCA end + 3 diphosphate. Catalyzes the addition and repair of the essential 3'-terminal CCA sequence in tRNAs without using a nucleic acid template. Adds these three nucleotides in the order of C, C, and A to the tRNA nucleotide-73, using CTP and ATP as substrates and producing inorganic pyrophosphate. tRNA 3'-terminal CCA addition is required both for tRNA processing and repair. Also involved in tRNA surveillance by mediating tandem CCA addition to generate a CCACCA at the 3' terminus of unstable tRNAs. While stable tRNAs receive only 3'-terminal CCA, unstable tRNAs are marked with CCACCA and rapidly degraded. The sequence is that of Multifunctional CCA protein from Paraburkholderia phymatum (strain DSM 17167 / CIP 108236 / LMG 21445 / STM815) (Burkholderia phymatum).